Here is a 670-residue protein sequence, read N- to C-terminus: DNA ligase (670 aa).

NAD(+) is bound by residues 35 to 39 (DSVYD), 84 to 85 (SL), and E116. The N6-AMP-lysine intermediate role is filled by K118. 4 residues coordinate NAD(+): R139, E176, K293, and K317. Residues C411, C414, C429, and C435 each coordinate Zn(2+). In terms of domain architecture, BRCT spans 592–670 (VVKSEIAGKT…EEAFLKLLKS (79 aa)).

The protein belongs to the NAD-dependent DNA ligase family. LigA subfamily. The cofactor is Mg(2+). Requires Mn(2+) as cofactor.

The catalysed reaction is NAD(+) + (deoxyribonucleotide)n-3'-hydroxyl + 5'-phospho-(deoxyribonucleotide)m = (deoxyribonucleotide)n+m + AMP + beta-nicotinamide D-nucleotide.. Functionally, DNA ligase that catalyzes the formation of phosphodiester linkages between 5'-phosphoryl and 3'-hydroxyl groups in double-stranded DNA using NAD as a coenzyme and as the energy source for the reaction. It is essential for DNA replication and repair of damaged DNA. This chain is DNA ligase, found in Coxiella burnetii (strain Dugway 5J108-111).